Reading from the N-terminus, the 235-residue chain is UPF0749 protein YlxX (235 aa).

Residues Ser-6–Asn-26 form a helical membrane-spanning segment.

It belongs to the UPF0749 family.

The protein localises to the cell membrane. This Bacillus subtilis (strain 168) protein is UPF0749 protein YlxX (ylxX).